The following is a 144-amino-acid chain: Toxin MT0934 (144 aa).

Toxic component of a type II toxin-antitoxin (TA) system. Its toxic effect is neutralized by coexpression with cognate antitoxin MT0933. In Mycobacterium tuberculosis (strain CDC 1551 / Oshkosh), this protein is Toxin MT0934.